The sequence spans 442 residues: Shufflon protein B (442 aa).

The constant region stretch occupies residues 1 to 361 (MKKYDRGWAS…TGAILSCQSG (361 aa)). Residues 362 to 442 (TWKSSSASIW…SYFMKITCLK (81 aa)) are variable region.

In Escherichia coli, this protein is Shufflon protein B.